The sequence spans 312 residues: tRNA dimethylallyltransferase (312 aa).

Residue 19–26 (GPSGSGKS) coordinates ATP. Substrate is bound at residue 21–26 (SGSGKS). Residues 44–47 (DSLS) are interaction with substrate tRNA.

The protein belongs to the IPP transferase family. As to quaternary structure, monomer. Requires Mg(2+) as cofactor.

It carries out the reaction adenosine(37) in tRNA + dimethylallyl diphosphate = N(6)-dimethylallyladenosine(37) in tRNA + diphosphate. Functionally, catalyzes the transfer of a dimethylallyl group onto the adenine at position 37 in tRNAs that read codons beginning with uridine, leading to the formation of N6-(dimethylallyl)adenosine (i(6)A). The protein is tRNA dimethylallyltransferase of Helicobacter pylori (strain J99 / ATCC 700824) (Campylobacter pylori J99).